Here is a 507-residue protein sequence, read N- to C-terminus: Maturase K (507 aa).

Belongs to the intron maturase 2 family. MatK subfamily.

It is found in the plastid. The protein resides in the chloroplast. Functionally, usually encoded in the trnK tRNA gene intron. Probably assists in splicing its own and other chloroplast group II introns. This chain is Maturase K, found in Asimina triloba (Pawpaw).